A 344-amino-acid polypeptide reads, in one-letter code: Phenylalanine--tRNA ligase alpha subunit (344 aa).

Glu259 is a binding site for Mg(2+).

It belongs to the class-II aminoacyl-tRNA synthetase family. Phe-tRNA synthetase alpha subunit type 1 subfamily. Tetramer of two alpha and two beta subunits. It depends on Mg(2+) as a cofactor.

Its subcellular location is the cytoplasm. It catalyses the reaction tRNA(Phe) + L-phenylalanine + ATP = L-phenylalanyl-tRNA(Phe) + AMP + diphosphate + H(+). In Petrotoga mobilis (strain DSM 10674 / SJ95), this protein is Phenylalanine--tRNA ligase alpha subunit.